A 60-amino-acid polypeptide reads, in one-letter code: UPF0391 membrane protein CCNA_00709 (60 aa).

2 helical membrane-spanning segments follow: residues 4–24 and 33–53; these read WAII…SGLA and ILFF…GTVF.

It belongs to the UPF0391 family.

It is found in the cell membrane. This chain is UPF0391 membrane protein CCNA_00709, found in Caulobacter vibrioides (strain NA1000 / CB15N) (Caulobacter crescentus).